The primary structure comprises 234 residues: Ribose-5-phosphate isomerase A (234 aa).

Substrate is bound by residues 39-42, 92-95, and 105-108; these read TGST, DGAD, and KGGG. Glu114 functions as the Proton acceptor in the catalytic mechanism. Residue Lys132 coordinates substrate.

This sequence belongs to the ribose 5-phosphate isomerase family. Homodimer.

The catalysed reaction is aldehydo-D-ribose 5-phosphate = D-ribulose 5-phosphate. The protein operates within carbohydrate degradation; pentose phosphate pathway; D-ribose 5-phosphate from D-ribulose 5-phosphate (non-oxidative stage): step 1/1. Catalyzes the reversible conversion of ribose-5-phosphate to ribulose 5-phosphate. The polypeptide is Ribose-5-phosphate isomerase A (Albidiferax ferrireducens (strain ATCC BAA-621 / DSM 15236 / T118) (Rhodoferax ferrireducens)).